The sequence spans 149 residues: 3-hydroxyacyl-[acyl-carrier-protein] dehydratase FabZ (149 aa).

His53 is a catalytic residue.

The protein belongs to the thioester dehydratase family. FabZ subfamily.

Its subcellular location is the cytoplasm. The enzyme catalyses a (3R)-hydroxyacyl-[ACP] = a (2E)-enoyl-[ACP] + H2O. Its function is as follows. Involved in unsaturated fatty acids biosynthesis. Catalyzes the dehydration of short chain beta-hydroxyacyl-ACPs and long chain saturated and unsaturated beta-hydroxyacyl-ACPs. The polypeptide is 3-hydroxyacyl-[acyl-carrier-protein] dehydratase FabZ (Polynucleobacter asymbioticus (strain DSM 18221 / CIP 109841 / QLW-P1DMWA-1) (Polynucleobacter necessarius subsp. asymbioticus)).